A 187-amino-acid chain; its full sequence is Protein GrpE (187 aa).

The disordered stretch occupies residues 1-23 (MADEQNLDAQAQDQAAEAGAGEE). The segment covering 7 to 23 (LDAQAQDQAAEAGAGEE) has biased composition (low complexity).

The protein belongs to the GrpE family. As to quaternary structure, homodimer.

The protein localises to the cytoplasm. Its function is as follows. Participates actively in the response to hyperosmotic and heat shock by preventing the aggregation of stress-denatured proteins, in association with DnaK and GrpE. It is the nucleotide exchange factor for DnaK and may function as a thermosensor. Unfolded proteins bind initially to DnaJ; upon interaction with the DnaJ-bound protein, DnaK hydrolyzes its bound ATP, resulting in the formation of a stable complex. GrpE releases ADP from DnaK; ATP binding to DnaK triggers the release of the substrate protein, thus completing the reaction cycle. Several rounds of ATP-dependent interactions between DnaJ, DnaK and GrpE are required for fully efficient folding. This is Protein GrpE from Pseudomonas savastanoi pv. phaseolicola (strain 1448A / Race 6) (Pseudomonas syringae pv. phaseolicola (strain 1448A / Race 6)).